A 564-amino-acid chain; its full sequence is Eukaryotic translation initiation factor 3 subunit L (564 aa).

Position 2 is an N-acetylserine (Ser-2). The PCI domain maps to 331–537 (DAIRVFANIL…IHIADTKVAR (207 aa)). Lys-465 and Lys-549 each carry N6-acetyllysine.

The protein belongs to the eIF-3 subunit L family. In terms of assembly, component of the eukaryotic translation initiation factor 3 (eIF-3) complex, which is composed of 13 subunits: EIF3A, EIF3B, EIF3C, EIF3D, EIF3E, EIF3F, EIF3G, EIF3H, EIF3I, EIF3J, EIF3K, EIF3L and EIF3M. The eIF-3 complex appears to include 3 stable modules: module A is composed of EIF3A, EIF3B, EIF3G and EIF3I; module B is composed of EIF3F, EIF3H, and EIF3M; and module C is composed of EIF3C, EIF3D, EIF3E, EIF3K and EIF3L. EIF3C of module C binds EIF3B of module A and EIF3H of module B, thereby linking the three modules. EIF3J is a labile subunit that binds to the eIF-3 complex via EIF3B. The eIF-3 complex may interact with RPS6KB1 under conditions of nutrient depletion. Mitogenic stimulation may lead to binding and activation of a complex composed of MTOR and RPTOR, leading to phosphorylation and release of RPS6KB1 and binding of EIF4B to eIF-3. Interacts with RRN3.

The protein localises to the cytoplasm. In terms of biological role, component of the eukaryotic translation initiation factor 3 (eIF-3) complex, which is required for several steps in the initiation of protein synthesis. The eIF-3 complex associates with the 40S ribosome and facilitates the recruitment of eIF-1, eIF-1A, eIF-2:GTP:methionyl-tRNAi and eIF-5 to form the 43S pre-initiation complex (43S PIC). The eIF-3 complex stimulates mRNA recruitment to the 43S PIC and scanning of the mRNA for AUG recognition. The eIF-3 complex is also required for disassembly and recycling of post-termination ribosomal complexes and subsequently prevents premature joining of the 40S and 60S ribosomal subunits prior to initiation. The eIF-3 complex specifically targets and initiates translation of a subset of mRNAs involved in cell proliferation, including cell cycling, differentiation and apoptosis, and uses different modes of RNA stem-loop binding to exert either translational activation or repression. The chain is Eukaryotic translation initiation factor 3 subunit L (Eif3l) from Mus musculus (Mouse).